Consider the following 505-residue polypeptide: Glucan endo-1,3-beta-glucosidase 2 (505 aa).

Positions 1–20 (MASLLHLLLLSLSLLVLASA) are cleaved as a signal peptide. An N-linked (GlcNAc...) asparagine glycan is attached at asparagine 97. Glutamate 125 functions as the Proton donor in the catalytic mechanism. N-linked (GlcNAc...) asparagine glycans are attached at residues asparagine 180 and asparagine 262. The active-site Nucleophile is the glutamate 272. 3 N-linked (GlcNAc...) asparagine glycosylation sites follow: asparagine 304, asparagine 361, and asparagine 365. Cysteine 369 and cysteine 432 are disulfide-bonded. N-linked (GlcNAc...) asparagine glycosylation is found at asparagine 461, asparagine 466, and asparagine 473. Serine 477 is lipidated: GPI-anchor amidated serine. Positions 478 to 505 (SGIRSDLYYSRGIWSILTVMILNVANIL) are cleaved as a propeptide — removed in mature form.

The protein belongs to the glycosyl hydrolase 17 family. Contains two additional disulfide bonds.

It is found in the cell membrane. It catalyses the reaction Hydrolysis of (1-&gt;3)-beta-D-glucosidic linkages in (1-&gt;3)-beta-D-glucans.. The protein is Glucan endo-1,3-beta-glucosidase 2 of Arabidopsis thaliana (Mouse-ear cress).